A 420-amino-acid polypeptide reads, in one-letter code: Histidine--tRNA ligase (420 aa).

This sequence belongs to the class-II aminoacyl-tRNA synthetase family. As to quaternary structure, homodimer.

It localises to the cytoplasm. The enzyme catalyses tRNA(His) + L-histidine + ATP = L-histidyl-tRNA(His) + AMP + diphosphate + H(+). The sequence is that of Histidine--tRNA ligase from Macrococcus caseolyticus (strain JCSC5402) (Macrococcoides caseolyticum).